A 133-amino-acid chain; its full sequence is UPF0102 protein Plav_3586 (133 aa).

It belongs to the UPF0102 family.

The sequence is that of UPF0102 protein Plav_3586 from Parvibaculum lavamentivorans (strain DS-1 / DSM 13023 / NCIMB 13966).